A 340-amino-acid chain; its full sequence is MNNFDYYRDFDDFQRRETINFFLAKFPFASKAQLDVFLEQAKTAYVKLRTSNPKNVDWNQMLVLLLKKFGPEARSEKERLKRILSLQEQLKVRLEGEINRQVQQNSELFSQLKQSESEIIQMQQLVEAKEHQIEALNKQLHAIKEANKKLIEEHESINVEELLKEYEVQCNEAIYKRDQHIQTVFEDKLALKDGEISETQSLLKTAEKEKQALKKAYKLVVNSLQKHQKLTTEIEIDFTKLDEIIATIFDETKNPKTGFTNFIKQFEKTKAKLTKKIAEITKLDHSTPTNYQQETPASQQQLDQENEPIKPSKKSNSSSLPRGTTQPKSNSINRVSKLID.

A disordered region spans residues 284-340; that stretch reads DHSTPTNYQQETPASQQQLDQENEPIKPSKKSNSSSLPRGTTQPKSNSINRVSKLID. 2 stretches are compositionally biased toward polar residues: residues 286–303 and 320–334; these read STPTNYQQETPASQQQLD and LPRGTTQPKSNSINR.

This is an uncharacterized protein from Mycoplasma genitalium (strain ATCC 33530 / DSM 19775 / NCTC 10195 / G37) (Mycoplasmoides genitalium).